The chain runs to 212 residues: Imidazole glycerol phosphate synthase subunit HisH 2 (212 aa).

The region spanning 4–211 is the Glutamine amidotransferase type-1 domain; it reads HLGLIDYGMG…LDWLQRGAPI (208 aa). Cys-82 functions as the Nucleophile in the catalytic mechanism. Residues His-186 and Glu-188 contribute to the active site.

In terms of assembly, heterodimer of HisH and HisF.

It localises to the cytoplasm. It carries out the reaction 5-[(5-phospho-1-deoxy-D-ribulos-1-ylimino)methylamino]-1-(5-phospho-beta-D-ribosyl)imidazole-4-carboxamide + L-glutamine = D-erythro-1-(imidazol-4-yl)glycerol 3-phosphate + 5-amino-1-(5-phospho-beta-D-ribosyl)imidazole-4-carboxamide + L-glutamate + H(+). It catalyses the reaction L-glutamine + H2O = L-glutamate + NH4(+). It participates in amino-acid biosynthesis; L-histidine biosynthesis; L-histidine from 5-phospho-alpha-D-ribose 1-diphosphate: step 5/9. In terms of biological role, IGPS catalyzes the conversion of PRFAR and glutamine to IGP, AICAR and glutamate. The HisH subunit provides the glutamine amidotransferase activity that produces the ammonia necessary to HisF for the synthesis of IGP and AICAR. The polypeptide is Imidazole glycerol phosphate synthase subunit HisH 2 (hisH2) (Parasynechococcus marenigrum (strain WH8102)).